We begin with the raw amino-acid sequence, 571 residues long: Sulfite reductase [NADPH] hemoprotein beta-component (571 aa).

The [4Fe-4S] cluster site is built by Cys435, Cys441, Cys480, and Cys484. Cys484 serves as a coordination point for siroheme.

The protein belongs to the nitrite and sulfite reductase 4Fe-4S domain family. In terms of assembly, alpha(8)-beta(8). The alpha component is a flavoprotein, the beta component is a hemoprotein. Siroheme is required as a cofactor. The cofactor is [4Fe-4S] cluster.

The catalysed reaction is hydrogen sulfide + 3 NADP(+) + 3 H2O = sulfite + 3 NADPH + 4 H(+). Its pathway is sulfur metabolism; hydrogen sulfide biosynthesis; hydrogen sulfide from sulfite (NADPH route): step 1/1. Its function is as follows. Component of the sulfite reductase complex that catalyzes the 6-electron reduction of sulfite to sulfide. This is one of several activities required for the biosynthesis of L-cysteine from sulfate. The sequence is that of Sulfite reductase [NADPH] hemoprotein beta-component from Dickeya chrysanthemi (strain Ech1591) (Dickeya zeae (strain Ech1591)).